Consider the following 299-residue polypeptide: MATH domain and coiled-coil domain-containing protein At2g42460 (299 aa).

One can recognise an MATH domain in the interval 7–130 (QKTFTWKIEN…NNTLFIEVYI (124 aa)). Residues 225–262 (FRVKWLKSKLDEISLARKKKVDADAARVQELEGKVKNQ) adopt a coiled-coil conformation.

The sequence is that of MATH domain and coiled-coil domain-containing protein At2g42460 from Arabidopsis thaliana (Mouse-ear cress).